We begin with the raw amino-acid sequence, 302 residues long: Bifunctional protein FolD (302 aa).

NADP(+)-binding positions include 165–167 (GRS), Ser-190, and Ile-231.

This sequence belongs to the tetrahydrofolate dehydrogenase/cyclohydrolase family. As to quaternary structure, homodimer.

It catalyses the reaction (6R)-5,10-methylene-5,6,7,8-tetrahydrofolate + NADP(+) = (6R)-5,10-methenyltetrahydrofolate + NADPH. The enzyme catalyses (6R)-5,10-methenyltetrahydrofolate + H2O = (6R)-10-formyltetrahydrofolate + H(+). It participates in one-carbon metabolism; tetrahydrofolate interconversion. Its function is as follows. Catalyzes the oxidation of 5,10-methylenetetrahydrofolate to 5,10-methenyltetrahydrofolate and then the hydrolysis of 5,10-methenyltetrahydrofolate to 10-formyltetrahydrofolate. This is Bifunctional protein FolD from Prochlorococcus marinus (strain MIT 9211).